We begin with the raw amino-acid sequence, 247 residues long: Nodulation protein H (247 aa).

Residues 1–16 are hydrophobic; sequence MTHSTLPPRPFAILAM.

Functionally, required for the formation of sulfated nod factor. Proposed to transfer activated sulfate (PAPS) to a N-acetylglucosamine of the nod factor. This is Nodulation protein H (nodH) from Rhizobium meliloti (Ensifer meliloti).